Here is a 204-residue protein sequence, read N- to C-terminus: Cytochrome c biogenesis ATP-binding export protein CcmA (204 aa).

The region spanning 3–204 (LSGHGLRCVR…ARELRIGGTT (202 aa)) is the ABC transporter domain. Residue 35 to 42 (GPNGAGKT) coordinates ATP.

The protein belongs to the ABC transporter superfamily. CcmA exporter (TC 3.A.1.107) family. The complex is composed of two ATP-binding proteins (CcmA) and two transmembrane proteins (CcmB).

It localises to the cell inner membrane. The enzyme catalyses heme b(in) + ATP + H2O = heme b(out) + ADP + phosphate + H(+). In terms of biological role, part of the ABC transporter complex CcmAB involved in the biogenesis of c-type cytochromes; once thought to export heme, this seems not to be the case, but its exact role is uncertain. Responsible for energy coupling to the transport system. This chain is Cytochrome c biogenesis ATP-binding export protein CcmA, found in Nitrobacter hamburgensis (strain DSM 10229 / NCIMB 13809 / X14).